The following is a 285-amino-acid chain: Foldase protein PrsA 2 (285 aa).

Residues 1–20 (MRGKHIFIITALISILMLSA) form the signal peptide. A lipid anchor (N-palmitoyl cysteine) is attached at C21. The S-diacylglycerol cysteine moiety is linked to residue C21. The region spanning 134–224 (KPEIKASHIL…NGYHVIKLTD (91 aa)) is the PpiC domain.

It belongs to the PrsA family.

It localises to the cell membrane. The enzyme catalyses [protein]-peptidylproline (omega=180) = [protein]-peptidylproline (omega=0). Functionally, plays a major role in protein secretion by helping the post-translocational extracellular folding of several secreted proteins. In Bacillus cereus (strain ATCC 14579 / DSM 31 / CCUG 7414 / JCM 2152 / NBRC 15305 / NCIMB 9373 / NCTC 2599 / NRRL B-3711), this protein is Foldase protein PrsA 2 (prsA2).